A 1338-amino-acid chain; its full sequence is Aldehyde oxidase 1 (1338 aa).

The 2Fe-2S ferredoxin-type domain occupies 5–92 (SELLFYVNGR…GTAVTTVEGI (88 aa)). Mo-molybdopterin-binding residues include glutamine 113 and cysteine 151. In terms of domain architecture, FAD-binding PCMH-type spans 236-421 (FGSERMMWFS…VSVNIPYSRK (186 aa)). FAD is bound by residues 264–271 (VIMGNTSV), alanine 345, serine 354, histidine 358, aspartate 367, and leucine 411. Residues 806–807 (AF) and methionine 1047 each bind Mo-molybdopterin. Serine 1068 carries the phosphoserine modification. Mo-molybdopterin is bound by residues 1088–1091 (GSVV), glutamine 1203, and leucine 1268. The Proton acceptor; for azaheterocycle hydroxylase activity role is filled by glutamate 1270.

Belongs to the xanthine dehydrogenase family. In terms of assembly, homodimer. It depends on [2Fe-2S] cluster as a cofactor. Requires FAD as cofactor. Mo-molybdopterin is required as a cofactor. In terms of tissue distribution, detected at high levels in liver, also detected in lung, kidney, lacrimal gland and olfactory mucosa.

Its subcellular location is the cytoplasm. The catalysed reaction is an aldehyde + O2 + H2O = a carboxylate + H2O2 + H(+). It carries out the reaction retinal + O2 + H2O = retinoate + H2O2 + H(+). Its function is as follows. Oxidase with broad substrate specificity, oxidizing aromatic azaheterocycles, such as N1-methylnicotinamide, N-methylphthalazinium and phthalazine, as well as aldehydes, such as benzaldehyde, retinal, pyridoxal, and vanillin. Plays a key role in the metabolism of xenobiotics and drugs containing aromatic azaheterocyclic substituents. Participates in the bioactivation of prodrugs such as famciclovir, catalyzing the oxidation step from 6-deoxypenciclovir to penciclovir, which is a potent antiviral agent. Is probably involved in the regulation of reactive oxygen species homeostasis. May be a prominent source of superoxide generation via the one-electron reduction of molecular oxygen. May also catalyze nitric oxide (NO) production via the reduction of nitrite to NO with NADH or aldehyde as electron donor. May play a role in adipogenesis. The protein is Aldehyde oxidase 1 (AOX1) of Macaca fascicularis (Crab-eating macaque).